The primary structure comprises 206 residues: 7-methyl-GTP pyrophosphatase (206 aa).

The active-site Proton acceptor is Asp-82.

Belongs to the Maf family. YceF subfamily. A divalent metal cation serves as cofactor.

The protein localises to the cytoplasm. The enzyme catalyses N(7)-methyl-GTP + H2O = N(7)-methyl-GMP + diphosphate + H(+). In terms of biological role, nucleoside triphosphate pyrophosphatase that hydrolyzes 7-methyl-GTP (m(7)GTP). May have a dual role in cell division arrest and in preventing the incorporation of modified nucleotides into cellular nucleic acids. The polypeptide is 7-methyl-GTP pyrophosphatase (Shewanella denitrificans (strain OS217 / ATCC BAA-1090 / DSM 15013)).